We begin with the raw amino-acid sequence, 532 residues long: Glutamate--cysteine ligase (532 aa).

Belongs to the glutamate--cysteine ligase type 1 family. Type 1 subfamily.

It carries out the reaction L-cysteine + L-glutamate + ATP = gamma-L-glutamyl-L-cysteine + ADP + phosphate + H(+). It functions in the pathway sulfur metabolism; glutathione biosynthesis; glutathione from L-cysteine and L-glutamate: step 1/2. In Pseudomonas fluorescens (strain ATCC BAA-477 / NRRL B-23932 / Pf-5), this protein is Glutamate--cysteine ligase.